Here is a 231-residue protein sequence, read N- to C-terminus: Probable cell wall protein ARB_06477 (231 aa).

Residues 1 to 17 (MRSVLYLLFTAVAAVAA) form the signal peptide. A disordered region spans residues 107–206 (TPSFMVDGAT…TGMPTSSGAP (100 aa)). A compositionally biased stretch (low complexity) spans 121–204 (TGPTTSRTSM…SSTGMPTSSG (84 aa)). A lipid anchor (GPI-anchor amidated serine) is attached at Ser203. Residues 204–231 (GAPDPNGAVSLALPGGLLSIVLSLMALL) constitute a propeptide, removed in mature form.

Belongs to the SRP1/TIP1 family. In terms of processing, the GPI-anchor is attached to the protein in the endoplasmic reticulum and serves to target the protein to the cell surface. There, the glucosamine-inositol phospholipid moiety is cleaved off and the GPI-modified mannoprotein is covalently attached via its lipidless GPI glycan remnant to the 1,6-beta-glucan of the outer cell wall layer.

It is found in the cell membrane. The protein localises to the secreted. Its subcellular location is the cell wall. Its function is as follows. Probable component of the cell wall. The protein is Probable cell wall protein ARB_06477 of Arthroderma benhamiae (strain ATCC MYA-4681 / CBS 112371) (Trichophyton mentagrophytes).